The sequence spans 489 residues: MIKNGPYLALDTSYQKLSVDELLETAGKRLPEHFDDYRQQLCRGEYRNISEDRPVTHVLSRSVHAVAKQSNRKTRFVDTVQKLRSGRRLGSTGKPITDVVNIGVGGSDLGPQMGAFALREFANDAALHNLQVHFVSSMDGGQLYAVLPIVDPETTLFIISSKSFGTVDTFANVDTVRKWIEPELTQEQWLENHVIGVSANAQGMTDYGIPPAQQFTFGDGVGGRFSLWSALGLSIALTTGIRPFERMLEGAKAMDEHFLDAPLNENLPVLLALYGVYNREQLGINNLAILPYDGRLRMLPNYLQQLDMESNGKQYTAENEAIDYPTGPIIWGGFGPNGQHAFFQHLHQGYDQFTADFVTVLKREAPGFSDATRSGLAEQQRLAVANCLAHRRLMSDGSENADSPSDHYPGGHPSNLLIMDELTPESFGALIAAYEHKVFTQGVIWGLNSFDQPGVEKGKKIAMDVLRVLDGESDESFDESTDAVIQRMR.

Catalysis depends on glutamate 309, which acts as the Proton donor. Residues histidine 340 and lysine 459 contribute to the active site.

The protein belongs to the GPI family.

Its subcellular location is the cytoplasm. The catalysed reaction is alpha-D-glucose 6-phosphate = beta-D-fructose 6-phosphate. It functions in the pathway carbohydrate biosynthesis; gluconeogenesis. It participates in carbohydrate degradation; glycolysis; D-glyceraldehyde 3-phosphate and glycerone phosphate from D-glucose: step 2/4. Catalyzes the reversible isomerization of glucose-6-phosphate to fructose-6-phosphate. The polypeptide is Glucose-6-phosphate isomerase (Idiomarina loihiensis (strain ATCC BAA-735 / DSM 15497 / L2-TR)).